The sequence spans 256 residues: Ribonuclease 3 (256 aa).

Positions 3–125 (LDALQQRLGY…IVGAVFLDAG (123 aa)) constitute an RNase III domain. Glu-38 contributes to the Mg(2+) binding site. Asp-42 is an active-site residue. The Mg(2+) site is built by Asp-111 and Glu-114. The active site involves Glu-114. The DRBM domain maps to 152–222 (DAKTLLQEYL…AKLALDEVQK (71 aa)). The segment at 229-256 (KRSRAERTGKTRKQPVPPDPQLSLRLKE) is disordered.

This sequence belongs to the ribonuclease III family. As to quaternary structure, homodimer. It depends on Mg(2+) as a cofactor.

It is found in the cytoplasm. It carries out the reaction Endonucleolytic cleavage to 5'-phosphomonoester.. Its function is as follows. Digests double-stranded RNA. Involved in the processing of primary rRNA transcript to yield the immediate precursors to the large and small rRNAs (23S and 16S). Processes some mRNAs, and tRNAs when they are encoded in the rRNA operon. Processes pre-crRNA and tracrRNA of type II CRISPR loci if present in the organism. The protein is Ribonuclease 3 of Cupriavidus pinatubonensis (strain JMP 134 / LMG 1197) (Cupriavidus necator (strain JMP 134)).